We begin with the raw amino-acid sequence, 340 residues long: Biotin synthase (340 aa).

Residues 56-283 (NAVQLSTLLS…KAVVRLSAGR (228 aa)) form the Radical SAM core domain. 3 residues coordinate [4Fe-4S] cluster: C71, C75, and C78. Residues C115, C146, C206, and R278 each coordinate [2Fe-2S] cluster.

This sequence belongs to the radical SAM superfamily. Biotin synthase family. As to quaternary structure, homodimer. [4Fe-4S] cluster serves as cofactor. It depends on [2Fe-2S] cluster as a cofactor.

It carries out the reaction (4R,5S)-dethiobiotin + (sulfur carrier)-SH + 2 reduced [2Fe-2S]-[ferredoxin] + 2 S-adenosyl-L-methionine = (sulfur carrier)-H + biotin + 2 5'-deoxyadenosine + 2 L-methionine + 2 oxidized [2Fe-2S]-[ferredoxin]. The protein operates within cofactor biosynthesis; biotin biosynthesis; biotin from 7,8-diaminononanoate: step 2/2. Functionally, catalyzes the conversion of dethiobiotin (DTB) to biotin by the insertion of a sulfur atom into dethiobiotin via a radical-based mechanism. This Burkholderia lata (strain ATCC 17760 / DSM 23089 / LMG 22485 / NCIMB 9086 / R18194 / 383) protein is Biotin synthase.